The primary structure comprises 151 residues: Transcription factor ATOH7 (151 aa).

Residues 39–91 enclose the bHLH domain; sequence KRRLAANARERRRMQGLNTAFDRLRKVVPQWGQDKKLSKYETLQMALSYIMAL.

The protein localises to the nucleus. It localises to the perikaryon. The protein resides in the cell projection. It is found in the axon. Functionally, transcription factor that binds to DNA at the consensus sequence 5'-CAG[GC]TG-3'. Positively regulates the determination of retinal ganglion cell fate and formation of the optic nerve and retino-hypothalamic tract. Required for retinal circadian rhythm photoentrainment. Plays a role in brainstem auditory signaling and binaural processing. During retinal neurogenesis, activates its own transcription, as well as the transcription of CHRNB3 and BRN3. This is Transcription factor ATOH7 from Gallus gallus (Chicken).